The primary structure comprises 465 residues: MSQGKIVQIIGAVIDVEFPRDAMPKVYDALKLVDADLTLEVQQQLGDGVVRTIAMGSSDGLKRGMAVANTGAPISVPVGAATLGRIMDVLGNPVDEAGPVATDARRAIHQAAPKFDELSAAADILETGIKVIDLLCPFAKGGKVGLFGGAGVGKTVNMMELINNIAKAHSGLSVFAGVGERTREGNDFYHEMKDSNVLDKVAMVYGQMNEPPGNRLRVALTGLTMAEHFRDEKDENGKGRDVLLFVDNIYRYTLAGTEVSALLGRMPSAVGYQPTLAEEMGRLQERITSTKDGSITSIQAVYVPADDLTDPSPATTFAHLDATVVLSRDIASLGIYPAVDPLDSTSRQLDPLVVGDEHYTVARGVQSTLQRYKELRDIIAILGMDELSEEDKLVVARARKIQRFLSQPFHVAEVFTGSPGKYVPLRETIKGFKAILAGEYDHLPEQAFYMVGAIEEAAEKAKTLN.

Position 148 to 155 (148 to 155 (GGAGVGKT)) interacts with ATP.

The protein belongs to the ATPase alpha/beta chains family. As to quaternary structure, F-type ATPases have 2 components, CF(1) - the catalytic core - and CF(0) - the membrane proton channel. CF(1) has five subunits: alpha(3), beta(3), gamma(1), delta(1), epsilon(1). CF(0) has three main subunits: a(1), b(2) and c(9-12). The alpha and beta chains form an alternating ring which encloses part of the gamma chain. CF(1) is attached to CF(0) by a central stalk formed by the gamma and epsilon chains, while a peripheral stalk is formed by the delta and b chains.

The protein localises to the cell inner membrane. It catalyses the reaction ATP + H2O + 4 H(+)(in) = ADP + phosphate + 5 H(+)(out). Functionally, produces ATP from ADP in the presence of a proton gradient across the membrane. The catalytic sites are hosted primarily by the beta subunits. The polypeptide is ATP synthase subunit beta (Chromobacterium violaceum (strain ATCC 12472 / DSM 30191 / JCM 1249 / CCUG 213 / NBRC 12614 / NCIMB 9131 / NCTC 9757 / MK)).